The primary structure comprises 108 residues: Ribonuclease P protein component 4 (108 aa).

Residues Cys60, Cys63, Cys86, and Cys89 each coordinate Zn(2+).

The protein belongs to the eukaryotic/archaeal RNase P protein component 4 family. In terms of assembly, consists of a catalytic RNA component and at least 4-5 protein subunits. It depends on Zn(2+) as a cofactor.

The protein resides in the cytoplasm. The enzyme catalyses Endonucleolytic cleavage of RNA, removing 5'-extranucleotides from tRNA precursor.. Functionally, part of ribonuclease P, a protein complex that generates mature tRNA molecules by cleaving their 5'-ends. The sequence is that of Ribonuclease P protein component 4 from Sulfurisphaera tokodaii (strain DSM 16993 / JCM 10545 / NBRC 100140 / 7) (Sulfolobus tokodaii).